A 352-amino-acid chain; its full sequence is Small ribosomal subunit biogenesis GTPase RsgA 2 (352 aa).

Positions 100 to 257 (RQDGQIIATN…VIDTPGMREL (158 aa)) constitute a CP-type G domain. GTP contacts are provided by residues 147 to 150 (TKAD) and 199 to 207 (GSSGVGKST). Zn(2+) is bound by residues Cys278, Cys283, His285, and Cys291.

It belongs to the TRAFAC class YlqF/YawG GTPase family. RsgA subfamily. Monomer. Associates with 30S ribosomal subunit, binds 16S rRNA. Requires Zn(2+) as cofactor.

The protein localises to the cytoplasm. Functionally, one of several proteins that assist in the late maturation steps of the functional core of the 30S ribosomal subunit. Helps release RbfA from mature subunits. May play a role in the assembly of ribosomal proteins into the subunit. Circularly permuted GTPase that catalyzes slow GTP hydrolysis, GTPase activity is stimulated by the 30S ribosomal subunit. This is Small ribosomal subunit biogenesis GTPase RsgA 2 from Lactiplantibacillus plantarum (strain ATCC BAA-793 / NCIMB 8826 / WCFS1) (Lactobacillus plantarum).